The primary structure comprises 226 residues: Ribonuclease 3 (226 aa).

Residues 6–128 (INRLQRKLGY…LIGGIFLDSD (123 aa)) enclose the RNase III domain. Mg(2+) is bound at residue Glu41. Residue Asp45 is part of the active site. Mg(2+) is bound by residues Asp114 and Glu117. Glu117 is an active-site residue. Residues 155-225 (DPKTRLQEFL…AEQALKQLEL (71 aa)) enclose the DRBM domain.

Belongs to the ribonuclease III family. Homodimer. The cofactor is Mg(2+).

It localises to the cytoplasm. The catalysed reaction is Endonucleolytic cleavage to 5'-phosphomonoester.. Its function is as follows. Digests double-stranded RNA. Involved in the processing of primary rRNA transcript to yield the immediate precursors to the large and small rRNAs (23S and 16S). Processes some mRNAs, and tRNAs when they are encoded in the rRNA operon. Processes pre-crRNA and tracrRNA of type II CRISPR loci if present in the organism. This is Ribonuclease 3 from Edwardsiella ictaluri (strain 93-146).